The primary structure comprises 64 residues: Large ribosomal subunit protein bL35 (64 aa).

Belongs to the bacterial ribosomal protein bL35 family.

The chain is Large ribosomal subunit protein bL35 from Pelodictyon phaeoclathratiforme (strain DSM 5477 / BU-1).